Here is a 213-residue protein sequence, read N- to C-terminus: MQGWIVRISHWNTYLPIAGTMQACGDKSSVWKVAIGYNGHPEEATFFNGRRSYAVNNRGAKPEKERTLRLNIEITPVESQGCNQLPTPATFEFRIPHSHFFNWSVELYFHNAVLPSYRCHFCPRPSLVLRTHAISAEYSWLAVDITLGLNRHHNIAVEYVKYIKHLEVGKDIICQLLYLSGYFLYVVPLSIPTKYSKYVSQCTVDPYREAGGF.

Part of the gene cluster that mediates the biosynthesis of andrastins, meroterpenoid compounds that exhibit inhibitory activity against ras farnesyltransferase, suggesting that they could be promising leads for antitumor agents. The first step of the pathway is the synthesis of 3,5-dimethylorsellinic acid (DMOA) by the polyketide synthase adrD via condensation of one acetyl-CoA starter unit with 3 malonyl-CoA units and 2 methylations. DMAO is then converted to farnesyl-DMAO by the prenyltransferase adrG. The methyltransferase adrK catalyzes the methylation of the carboxyl group of farnesyl-DMAO to farnesyl-DMAO methyl ester which is further converted to epoxyfarnesyl-DMAO methyl ester by the FAD-dependent monooxygenase adrH. The terpene cyclase adrI then catalyzes the carbon skeletal rearrangement to generate the andrastin E, the first compound in the pathway having the andrastin scaffold, with the tetracyclic ring system. The post-cyclization tailoring enzymes adrF, adrE, adrJ, and adrA, are involved in the conversion of andrastin E into andrastin A. The short chain dehydrogenase adrF is responsible for the oxidation of the C-3 a hydroxyl group of andrastin E to yield the corresponding ketone, andrastin D. The ketoreductase adrE stereoselectively reduces the carbonyl moiety to reverse the stereochemistry of the C-3 position to yield andrastin F. The acetyltransferase adrJ is the acetyltransferase that attaches the acetyl group to the C-3 hydroxyl group of andrastin F to yield andrastin C. Finally, the cytochrome P450 monooxygenase adrA catalyzes two sequential oxidation reactions of the C-23 methyl group, to generate the corresponding alcohol andrastin B, and aldehyde andrastin A. This chain is Andrastin A biosynthesis cluster protein B, found in Penicillium rubens (strain ATCC 28089 / DSM 1075 / NRRL 1951 / Wisconsin 54-1255) (Penicillium chrysogenum).